Consider the following 729-residue polypeptide: Fatty acid oxidation complex subunit alpha (729 aa).

The tract at residues 1-189 is enoyl-CoA hydratase/isomerase; it reads MLYKGDTLYL…KIGLVDGVVK (189 aa). Residue Asp-296 coordinates substrate. A 3-hydroxyacyl-CoA dehydrogenase region spans residues 311–729; the sequence is ETPKQAAVLG…ARPVGDLKTA (419 aa). Residues Met-324, Asp-343, 400 to 402, Lys-407, and Ser-429 contribute to the NAD(+) site; that span reads VVE. The active-site For 3-hydroxyacyl-CoA dehydrogenase activity is His-450. Asn-453 lines the NAD(+) pocket. Substrate is bound by residues Asn-500 and Tyr-660. The interval 708–729 is disordered; it reads RHNEPYYPPVEPARPVGDLKTA.

The protein in the N-terminal section; belongs to the enoyl-CoA hydratase/isomerase family. This sequence in the C-terminal section; belongs to the 3-hydroxyacyl-CoA dehydrogenase family. Heterotetramer of two alpha chains (FadB) and two beta chains (FadA).

It carries out the reaction a (3S)-3-hydroxyacyl-CoA + NAD(+) = a 3-oxoacyl-CoA + NADH + H(+). The catalysed reaction is a (3S)-3-hydroxyacyl-CoA = a (2E)-enoyl-CoA + H2O. It catalyses the reaction a 4-saturated-(3S)-3-hydroxyacyl-CoA = a (3E)-enoyl-CoA + H2O. The enzyme catalyses (3S)-3-hydroxybutanoyl-CoA = (3R)-3-hydroxybutanoyl-CoA. It carries out the reaction a (3Z)-enoyl-CoA = a 4-saturated (2E)-enoyl-CoA. The catalysed reaction is a (3E)-enoyl-CoA = a 4-saturated (2E)-enoyl-CoA. It participates in lipid metabolism; fatty acid beta-oxidation. In terms of biological role, involved in the aerobic and anaerobic degradation of long-chain fatty acids via beta-oxidation cycle. Catalyzes the formation of 3-oxoacyl-CoA from enoyl-CoA via L-3-hydroxyacyl-CoA. It can also use D-3-hydroxyacyl-CoA and cis-3-enoyl-CoA as substrate. The chain is Fatty acid oxidation complex subunit alpha from Escherichia coli O139:H28 (strain E24377A / ETEC).